The primary structure comprises 784 residues: Probable leucine-rich repeat receptor-like protein kinase IMK3 (784 aa).

A signal peptide spans 1 to 48 (MEFITQNQAITSLSMINTDIDQPKASLRSRFLLHLIICLLFFVPPCSS). The Extracellular portion of the chain corresponds to 49-409 (QAWDGVVITQ…PSHRNLSTKD (361 aa)). Asn82 carries an N-linked (GlcNAc...) asparagine glycan. LRR repeat units follow at residues 126-148 (ALRK…LGLI), 150-172 (NLRG…LGVS), 174-197 (FLQT…ADSS), 198-220 (KLLR…LSRS), 222-242 (SLQF…DTWG), 247-268 (NLRV…SLCN), 271-294 (QLQD…SKLT), 295-317 (KLRK…LGNI), 319-342 (SLIH…SDLE), and 343-365 (SLNF…LSQK). N-linked (GlcNAc...) asparagine glycosylation is found at Asn203, Asn232, and Asn268. N-linked (GlcNAc...) asparagine glycosylation is present at Asn316. 4 N-linked (GlcNAc...) asparagine glycosylation sites follow: Asn348, Asn353, Asn367, and Asn404. A helical transmembrane segment spans residues 410–430 (IILIASGALLIVMLILVCVLC). Residues 431-784 (CLLRKKANET…VPEASASTSQ (354 aa)) are Cytoplasmic-facing. A disordered region spans residues 441-467 (KAKGGEAGPGAVAAKTEKGGEAEAGGE). The region spanning 488–773 (CATAEIMGKS…TTATTSEPLI (286 aa)) is the Protein kinase domain. ATP is bound by residues 494–502 (MGKSTYGTV) and Lys516. The disordered stretch occupies residues 760-784 (RPEETTATTSEPLIDVPEASASTSQ).

This sequence belongs to the protein kinase superfamily. Ser/Thr protein kinase family. In terms of assembly, interacts with AGL24. In terms of processing, autophosphorylated. In terms of tissue distribution, expressed in meristems, including roots, vegetative, inflorescence and floral meristems, and in embryos.

It localises to the cell membrane. It catalyses the reaction L-seryl-[protein] + ATP = O-phospho-L-seryl-[protein] + ADP + H(+). It carries out the reaction L-threonyl-[protein] + ATP = O-phospho-L-threonyl-[protein] + ADP + H(+). Can phosphorylate AGL24. In Arabidopsis thaliana (Mouse-ear cress), this protein is Probable leucine-rich repeat receptor-like protein kinase IMK3 (IMK3).